A 508-amino-acid polypeptide reads, in one-letter code: Photosystem II CP47 reaction center protein (508 aa).

Helical transmembrane passes span 21-36, 101-115, 140-156, 203-218, 237-252, and 457-472; these read AVHI…WAGS, IILS…IWHW, GIHL…FGAF, IAAG…FHLS, VLSS…AFIV, and CFAL…HGAR.

It belongs to the PsbB/PsbC family. PsbB subfamily. In terms of assembly, PSII is composed of 1 copy each of membrane proteins PsbA, PsbB, PsbC, PsbD, PsbE, PsbF, PsbH, PsbI, PsbJ, PsbK, PsbL, PsbM, PsbT, PsbX, PsbY, PsbZ, Psb30/Ycf12, at least 3 peripheral proteins of the oxygen-evolving complex and a large number of cofactors. It forms dimeric complexes. It depends on Binds multiple chlorophylls. PSII binds additional chlorophylls, carotenoids and specific lipids. as a cofactor.

It is found in the plastid. The protein resides in the chloroplast thylakoid membrane. Functionally, one of the components of the core complex of photosystem II (PSII). It binds chlorophyll and helps catalyze the primary light-induced photochemical processes of PSII. PSII is a light-driven water:plastoquinone oxidoreductase, using light energy to abstract electrons from H(2)O, generating O(2) and a proton gradient subsequently used for ATP formation. This is Photosystem II CP47 reaction center protein from Chara vulgaris (Common stonewort).